We begin with the raw amino-acid sequence, 125 residues long: Large ribosomal subunit protein uL22c (125 aa).

It belongs to the universal ribosomal protein uL22 family. In terms of assembly, part of the 50S ribosomal subunit.

It localises to the plastid. It is found in the chloroplast. In terms of biological role, this protein binds specifically to 23S rRNA. Functionally, the globular domain of the protein is located near the polypeptide exit tunnel on the outside of the subunit, while an extended beta-hairpin is found that lines the wall of the exit tunnel in the center of the 70S ribosome. This is Large ribosomal subunit protein uL22c (rpl22) from Huperzia lucidula (Shining clubmoss).